We begin with the raw amino-acid sequence, 486 residues long: Protein kinase C and casein kinase substrate in neurons protein 2 (486 aa).

An F-BAR domain is found at 11-282; that stretch reads VEVSSDSFWE…SIKAADAVED (272 aa). Residues 25 to 274 are a coiled coil; the sequence is KRTVKRIDDG…TIYRELEQSI (250 aa). At K53 the chain carries N6-acetyllysine. S273 carries the phosphoserine modification. At S313 the chain carries Phosphoserine; by PKC. A disordered region spans residues 315–426; sequence REKKKAVDGV…NPFDEDTTSG (112 aa). Polar residues predominate over residues 327 to 362; it reads TGINQTGDQSGQNKPGSNLSVPSNPAQSTQLQSSYN. Residues 362–364 carry the NPF1 motif; sequence NPF. Residue S373 is modified to Phosphoserine; by IKKB. Over residues 384–396 the composition is skewed to polar residues; that stretch reads NVSSYEKTQTYPT. S399 bears the Phosphoserine mark. The segment covering 404 to 416 has biased composition (polar residues); sequence NNPFSSTDANGDS. The NPF2 motif lies at 405–407; the sequence is NPF. The NPF3 motif lies at 417-419; it reads NPF. In terms of domain architecture, SH3 spans 426 to 486; the sequence is GTEVRVRALY…YPANYVEAIQ (61 aa). S446 carries the phosphoserine modification.

The protein belongs to the PACSIN family. As to quaternary structure, homodimer. May form heterooligomers with other PACSINs. Interacts (via NPF motifs) with EHD1 (via EH domain). Interacts (via NPF motifs) with EHD2 (via EH domain); this interaction probably stabilizes the caveolae. Interacts with EHD3. Interacts (via the SH3 domain) with MICALL1. Interacts with RAC1. Interacts (via SH3 domain) with DNM1, SYN1, SYNJ1 and WASL. Interacts (via F-BAR domain) with CAV1; this interaction induces membrane tubulation. Interacts with TRPV4. Forms a complex with EHD4 and MICALL1; the complex controls CDH5 trafficking and coordinates angiogenesis. In terms of processing, phosphorylated by casein kinase 2 (CK2). Phosphorylation by PKC probably decreases the membrane binding and tubulation capacities of PACSIN2, thereby modulating the lifetime of caveolae. In terms of tissue distribution, widely expressed (at protein level).

The protein localises to the cytoplasm. The protein resides in the cytoskeleton. It is found in the cytoplasmic vesicle membrane. It localises to the cell projection. Its subcellular location is the ruffle membrane. The protein localises to the early endosome. The protein resides in the recycling endosome membrane. It is found in the cell membrane. It localises to the membrane. Its subcellular location is the caveola. The protein localises to the cell junction. The protein resides in the adherens junction. Regulates the morphogenesis and endocytosis of caveolae. Lipid-binding protein that is able to promote the tubulation of the phosphatidic acid-containing membranes it preferentially binds. Plays a role in intracellular vesicle-mediated transport. Involved in the endocytosis of cell-surface receptors like the EGF receptor, contributing to its internalization in the absence of EGF stimulus. Essential for endothelial organization in sprouting angiogenesis, modulates CDH5-based junctions. Facilitates endothelial front-rear polarity during migration by recruiting EHD4 and MICALL1 to asymmetric adherens junctions between leader and follower cells. The sequence is that of Protein kinase C and casein kinase substrate in neurons protein 2 (Pacsin2) from Mus musculus (Mouse).